Here is a 152-residue protein sequence, read N- to C-terminus: uncharacterized protein (152 aa).

Positions 1-23 (MYSILIACLVLLLCLVIYVGHRA) are cleaved as a signal peptide.

This sequence belongs to the asfivirus EP152R family.

The protein resides in the virion. This is an uncharacterized protein from Ornithodoros (relapsing fever ticks).